A 373-amino-acid polypeptide reads, in one-letter code: 3-dehydroquinate synthase (373 aa).

Residues 67-72, 101-105, 125-126, Lys-138, and Lys-147 each bind NAD(+); these read EGEETK, GVILD, and TT. Residues Glu-180, His-240, and His-256 each contribute to the Zn(2+) site.

It belongs to the sugar phosphate cyclases superfamily. Dehydroquinate synthase family. It depends on NAD(+) as a cofactor. Co(2+) serves as cofactor. Zn(2+) is required as a cofactor.

The protein resides in the cytoplasm. The catalysed reaction is 7-phospho-2-dehydro-3-deoxy-D-arabino-heptonate = 3-dehydroquinate + phosphate. It functions in the pathway metabolic intermediate biosynthesis; chorismate biosynthesis; chorismate from D-erythrose 4-phosphate and phosphoenolpyruvate: step 2/7. Its function is as follows. Catalyzes the conversion of 3-deoxy-D-arabino-heptulosonate 7-phosphate (DAHP) to dehydroquinate (DHQ). This is 3-dehydroquinate synthase from Chlamydia trachomatis serovar A (strain ATCC VR-571B / DSM 19440 / HAR-13).